The chain runs to 379 residues: MAYNIWEEYIMANFHNVYPVVTNLFLFIALSYSFCIFVFFSFFFVKMRKVIYFFLIICLHSNVGWHPFFVFFCGVSGLYVKELQVGNYYICNLKDYANETCTVNYDYNKMIKLLCPINKSYEEYDDRYCFKFIGIRDRLVINNQEEPIMDTLPGIIIENLNMFDRYNVGIYMPFYVKEDITIVCTCESSKDSEAITPYLKIHVKANNSFNKEGEFIKGCDYGNNKGKHQFLTNTLKQEENFLCEINANPGEVVGMNCINFEEYTTTTTINNKKKKHQNKNNKNNFDVIQLRPPHCFSNVSISMSFLRVVTMNVNNLLPEAKYYPEVYSFPKDKKFQKYSTISYLWIPENVPHDILFYCHCNFPQGKGIGLFNINKTVES.

The first 33 residues, 1–33 (MAYNIWEEYIMANFHNVYPVVTNLFLFIALSYS), serve as a signal peptide directing secretion. 6-Cys domains lie at 69-206 (FVFF…VKAN) and 215-379 (FIKG…TVES). 3 cysteine pairs are disulfide-bonded: Cys-91-Cys-101, Cys-115-Cys-186, and Cys-129-Cys-184. N-linked (GlcNAc...) asparagine glycosylation is found at Asn-98 and Asn-118. Asn-206 is a glycosylation site (N-linked (GlcNAc...) asparagine). Cystine bridges form between Cys-219–Cys-243, Cys-257–Cys-360, and Cys-295–Cys-358. 2 N-linked (GlcNAc...) asparagine glycosylation sites follow: Asn-298 and Asn-374.

The protein localises to the cell surface. It is found in the cell membrane. Functionally, involved in sporozoite infection of hepatocytes and replication therein. The polypeptide is Sporozoite surface protein P36 (PF36) (Plasmodium falciparum (isolate 3D7)).